We begin with the raw amino-acid sequence, 326 residues long: Probable cell division protein WhiA (326 aa).

The H-T-H motif DNA-binding region spans 275–308; the sequence is SLEELGQLAEPPMTKDAVAGRIRRLLAMADKRAR.

The protein belongs to the WhiA family.

Functionally, involved in cell division and chromosome segregation. The chain is Probable cell division protein WhiA from Saccharopolyspora erythraea (strain ATCC 11635 / DSM 40517 / JCM 4748 / NBRC 13426 / NCIMB 8594 / NRRL 2338).